Here is a 1500-residue protein sequence, read N- to C-terminus: Synaptonemal complex protein 2 (1500 aa).

Phosphoserine is present on residues Ser-457 and Ser-458. Thr-464 carries the phosphothreonine modification. Ser-487 is subject to Phosphoserine. Thr-496 carries the post-translational modification Phosphothreonine. A phosphoserine mark is found at Ser-500, Ser-509, Ser-518, and Ser-527. A disordered region spans residues Lys-512–Thr-548. Thr-608 and Thr-633 each carry phosphothreonine. Phosphoserine is present on residues Ser-646, Ser-650, and Ser-741. The interval Asn-796–Pro-820 is disordered. Ser-914 bears the Phosphoserine mark. Position 916 is a phosphothreonine (Thr-916). Disordered stretches follow at residues Leu-940–Ser-1010 and Lys-1029–Val-1084. Over residues Asn-948–Arg-958 the composition is skewed to basic residues. Residues Met-977–Thr-989 are compositionally biased toward basic and acidic residues. Over residues Arg-990 to Lys-1000 the composition is skewed to basic residues. Positions Pro-1059–Ser-1076 are enriched in basic and acidic residues. Phosphoserine occurs at positions 1115, 1117, 1124, 1133, 1140, 1144, 1156, 1159, and 1164. Residue Thr-1168 is modified to Phosphothreonine. Ser-1183, Ser-1213, and Ser-1216 each carry phosphoserine. The interval Tyr-1208–Leu-1234 is disordered. Residues Cys-1217–Asn-1228 show a composition bias toward basic and acidic residues. Residues Ser-1232, Ser-1275, and Ser-1277 each carry the phosphoserine modification. Thr-1313 is modified (phosphothreonine). Residues Leu-1388 to Glu-1429 adopt a coiled-coil conformation.

It belongs to the SYCP2 family. As to quaternary structure, component of the lateral elements of synaptonemal complexes. Heterodimer with SYCP3. Interacts with SMC1A and SMC3. Interacts with TEX11. Post-translationally, phosphorylated. As to expression, detected in testis and spermatocytes (at protein level).

Its subcellular location is the nucleus. The protein resides in the chromosome. Its function is as follows. Major component of the axial/lateral elements of synaptonemal complexes (SCS) during meiotic prophase. Plays a role in the assembly of synaptonemal complexes. Required for normal meiotic chromosome synapsis during oocyte and spermatocyte development and for normal male and female fertility. Required for insertion of SYCP3 into synaptonemal complexes. May be involved in the organization of chromatin by temporarily binding to DNA scaffold attachment regions. Requires SYCP3, but not SYCP1, in order to be incorporated into the axial/lateral elements. This is Synaptonemal complex protein 2 (Sycp2) from Mus musculus (Mouse).